Here is a 92-residue protein sequence, read N- to C-terminus: UPF0250 protein XAC0666 (92 aa).

This sequence belongs to the UPF0250 family.

The chain is UPF0250 protein XAC0666 from Xanthomonas axonopodis pv. citri (strain 306).